The primary structure comprises 555 residues: Urocanate hydratase (555 aa).

NAD(+) is bound by residues 53–54 (GG), Gln131, 177–179 (GMG), Glu197, Arg202, 243–244 (NA), 264–268 (QTSAH), 274–275 (YL), and Tyr323. Cys411 is a catalytic residue. Gly493 lines the NAD(+) pocket.

The protein belongs to the urocanase family. NAD(+) is required as a cofactor.

It localises to the cytoplasm. The catalysed reaction is 4-imidazolone-5-propanoate = trans-urocanate + H2O. It participates in amino-acid degradation; L-histidine degradation into L-glutamate; N-formimidoyl-L-glutamate from L-histidine: step 2/3. In terms of biological role, catalyzes the conversion of urocanate to 4-imidazolone-5-propionate. The protein is Urocanate hydratase of Maricaulis maris (strain MCS10) (Caulobacter maris).